The primary structure comprises 141 residues: Granulocyte-macrophage colony-stimulating factor (141 aa).

An N-terminal signal peptide occupies residues 1-17 (MWLQNLLFLGIVVYSLS). S22 carries an O-linked (GalNAc...) serine glycan. A glycan (O-linked (GalNAc...) threonine) is linked at T27. Intrachain disulfides connect C68/C110 and C102/C135. N-linked (GlcNAc...) asparagine glycosylation is found at N83 and N92.

The protein belongs to the GM-CSF family. In terms of assembly, monomer. The signaling GM-CSF receptor complex is a dodecamer of two head-to-head hexamers of two alpha, two beta, and two ligand subunits.

It localises to the secreted. Cytokine that stimulates the growth and differentiation of hematopoietic precursor cells from various lineages, including granulocytes, macrophages, eosinophils and erythrocytes. The sequence is that of Granulocyte-macrophage colony-stimulating factor (Csf2) from Mus musculus (Mouse).